Consider the following 561-residue polypeptide: Cytochrome P450 monooxygenase avaL (561 aa).

The chain crosses the membrane as a helical span at residues I19–L39. Residue C508 coordinates heme.

It belongs to the cytochrome P450 family. Requires heme as cofactor.

It localises to the membrane. Its pathway is secondary metabolite biosynthesis. Cytochrome P450 monooxygenase; part of the cluster that mediates the biosynthesis of a highly modified cyclo-arginine-tryptophan dipeptide (cRW). The first step of the pathway is perfornmed by the arginine-containing cyclodipeptide synthase (RCPDS) avaA that acts as the scaffold-generating enzyme and is responsible for formation of the cyclo-Arg-Trp (cRW) diketopiperazine. AvaB then acts as a multifunctional flavoenzyme that is responsible for generating the cyclo-Arg-formylkynurenine DKP, which can be deformylated by avaC. AvaB then further catalyzes an additional N-oxidation followed by cyclization and dehydration. The next step is an N-acetylation of the guanidine group catalyzed by the arginine N-acetyltransferase avaD. The roles of the additional enzymes identified within the ava cluster still have to be determined. In Aspergillus versicolor, this protein is Cytochrome P450 monooxygenase avaL.